The chain runs to 572 residues: Methionine--tRNA ligase (572 aa).

The short motif at 11-21 (PYVNHVPHLGT) is the 'HIGH' region element. Residues Cys143, Cys146, Cys156, and Cys159 each coordinate Zn(2+). The short motif at 334–338 (QFSKS) is the 'KMSKS' region element. Lys337 is a binding site for ATP.

The protein belongs to the class-I aminoacyl-tRNA synthetase family. MetG type 1 subfamily. The cofactor is Zn(2+).

It localises to the cytoplasm. It carries out the reaction tRNA(Met) + L-methionine + ATP = L-methionyl-tRNA(Met) + AMP + diphosphate. In terms of biological role, is required not only for elongation of protein synthesis but also for the initiation of all mRNA translation through initiator tRNA(fMet) aminoacylation. In Aeropyrum pernix (strain ATCC 700893 / DSM 11879 / JCM 9820 / NBRC 100138 / K1), this protein is Methionine--tRNA ligase (metG).